The chain runs to 1052 residues: SWI/SNF-related matrix-associated actin-dependent regulator of chromatin subfamily A member 5 (1052 aa).

Pro residues predominate over residues 1–15 (MSSAAEPPPPPPPES). Positions 1 to 83 (MSSAAEPPPP…QEPDPTYEEK (83 aa)) are disordered. The residue at position 2 (Ser-2) is an N-acetylserine. Positions 16–55 (APSKPAASIASGGSNSSNKGGPEGVAAQAVASAASAGPAD) are enriched in low complexity. Position 66 is a phosphoserine (Ser-66). Basic and acidic residues predominate over residues 69–83 (KQKEIQEPDPTYEEK). Lys-83 is covalently cross-linked (Glycyl lysine isopeptide (Lys-Gly) (interchain with G-Cter in SUMO2)). Thr-113 bears the Phosphothreonine mark. A phosphoserine mark is found at Ser-116, Ser-137, and Ser-171. Residues 192 to 357 (ISLYENGING…WSLLNFLLPD (166 aa)) enclose the Helicase ATP-binding domain. 205-212 (DEMGLGKT) is an ATP binding site. Positions 308 to 311 (DEAH) match the DEAH box motif. Lys-440 carries the post-translational modification N6-acetyllysine. The 152-residue stretch at 487–638 (VLDKLLPKLK…SIVIQQGRLV (152 aa)) folds into the Helicase C-terminal domain. Glycyl lysine isopeptide (Lys-Gly) (interchain with G-Cter in SUMO2) cross-links involve residues Lys-644, Lys-647, Lys-694, Lys-722, and Lys-735. Residues Ser-755 and Ser-825 each carry the phosphoserine modification. SANT domains are found at residues 840–892 (QGFT…ERCN) and 943–1007 (KGKN…LITL). A Glycyl lysine isopeptide (Lys-Gly) (interchain with G-Cter in SUMO2) cross-link involves residue Lys-966. Residues 1015–1052 (LEEKEKAEKKKRGPKPSTQKRKMDGAPDGRGRKKKLKL) are disordered. Over residues 1023-1034 (KKKRGPKPSTQK) the composition is skewed to basic residues. The span at 1035-1044 (RKMDGAPDGR) shows a compositional bias: basic and acidic residues.

Belongs to the SNF2/RAD54 helicase family. ISWI subfamily. Component of the ACF-5 ISWI chromatin-remodeling complex (also called the ACF/WCRF complex) at least composed of SMARCA5/SNF2H and BAZ1A/ACF1, which regulates the spacing of histone octamers on the DNA template to facilitate access to DNA. Within the complex interacts with BAZ1A/ACF1; the interaction is direct and is required to slide nucleosomes from end to center positions on a DNA template in an ATP-dependent manner. Component of the CHRAC ISWI chromatin-remodeling complex at least composed of SMARCA5/SNF2H, BAZ1A/ACF1, CHRAC1 and POLE3; the complex preferentially binds DNA through the CHRAC1-POLE3 heterodimer and possesses ATP-dependent nucleosome-remodeling activity. Within the complex interacts with BAZ1A/ACF1; the interaction is direct and promotes the interaction with the POLE3-CHRAC1 heterodimer. Within the complex interacts with the POLE3-CHRAC1 heterodimer; the interaction is direct and enhances nucleosome sliding activity by the SMARCA5/SNF2H and BAZ1A/ACF1 interaction. Neither POLE3 nor CHRAC1 enhances nucleosome sliding activity of the ACF-5 ISWI chromatin remodeling complex. Component of the WICH-5 ISWI chromatin-remodeling complex (also called the WICH complex) at least composed of SMARCA5/SNF2H and BAZ1B/WSTF, which regulates the spacing of histone octamers on the DNA template to facilitate access to DNA. Within the complex interacts with BAZ1B/WSTF. Component of the NoRC-5 ISWI chromatin-remodeling complex (also called the NoRC chromatin-remodeling complex) at least composed of SMARCA5/SNF2H and BAZ2A/TIP5; the complex suppresses rDNA transcription by a combination of nucleosome remodeling, histone deacetylation, and DNA methylation. Within the complex interacts with BAZ2A/TIP5. Within the complex interacts with HDAC1. Component of the BRF-5 ISWI chromatin-remodeling complex at least composed of SMARCA5/SNF2H and BAZ2B. Within the complex interacts with BAZ2B. Component of the NURF-5 ISWI chromatin-remodeling complex at least composed of SMARCA5/SNF2H and BPTF. Within the complex interacts with BPFT. Component of the CERF-5 ISWI chromatin-remodeling complex at least composed of SMARCA5/SNF2H and CECR2. LUZP1 is detected as part of the CERF-5 complex in embryonic stem cells where it is involved in complex stabilization but is not detected in the complex in the testis. Within the complex interacts with CECR2. Component of the RSF-5 ISWI chromatin-remodeling complex (also called the RSF complex) at least composed of SMARCA5/SNF2H and RSF1. Within the complex interacts with RSF1. Interacts with the cohesin complex component RAD21; the interaction is direct. Interacts with the NuRD complex components HDAC2, RBBP4 and CHD4; the interactions are direct. Interacts with PCNA. Component of the B-WICH complex, at least composed of SMARCA5/SNF2H, BAZ1B/WSTF, SF3B1, DEK, MYO1C, ERCC6, MYBBP1A and DDX21 which positively regulates RNA polymerase III transcription. Interacts with MYO1C. Interacts with BEND3. Interacts with SIRT6; promoting recruitment to DNA damage sites. In terms of assembly, (Microbial infection) Interacts with JC virus small t antigen. As to quaternary structure, (Microbial infection) Interacts with Epstein Barr virus (EBV) lytic switch protein BZLF1; this interaction participates to the activation of early lytic viral genes by BZLF1. Ubiquitously expressed.

The protein localises to the nucleus. Its subcellular location is the chromosome. The catalysed reaction is ATP + H2O = ADP + phosphate + H(+). ATPase that possesses intrinsic ATP-dependent nucleosome-remodeling activity. Catalytic subunit of ISWI chromatin-remodeling complexes, which form ordered nucleosome arrays on chromatin and facilitate access to DNA during DNA-templated processes such as DNA replication, transcription, and repair; this may require intact histone H4 tails. Within the ISWI chromatin-remodeling complexes, slides edge- and center-positioned histone octamers away from their original location on the DNA template. Catalytic activity and histone octamer sliding propensity is regulated and determined by components of the ISWI chromatin-remodeling complexes. The BAZ1A/ACF1-, BAZ1B/WSTF-, BAZ2A/TIP5- and BAZ2B-containing ISWI chromatin-remodeling complexes regulate the spacing of nucleosomes along the chromatin and have the ability to slide mononucleosomes to the center of a DNA template in an ATP-dependent manner. The CECR2- and RSF1-containing ISWI chromatin-remodeling complexes do not have the ability to slide mononucleosomes to the center of a DNA template. Binds to core histones together with RSF1, and is required for the assembly of regular nucleosome arrays by the RSF-5 ISWI chromatin-remodeling complex. Involved in DNA replication and together with BAZ1A/ACF1 is required for replication of pericentric heterochromatin in S-phase. Probably plays a role in repression of RNA polymerase I dependent transcription of the rDNA locus, through the recruitment of the SIN3/HDAC1 corepressor complex to the rDNA promoter. Essential component of the WICH-5 ISWI chromatin-remodeling complex (also called the WICH complex), a chromatin-remodeling complex that mobilizes nucleosomes and reconfigures irregular chromatin to a regular nucleosomal array structure. The WICH-5 ISWI chromatin-remodeling complex regulates the transcription of various genes, has a role in RNA polymerase I transcription. Within the B-WICH complex has a role in RNA polymerase III transcription. Mediates the histone H2AX phosphorylation at 'Tyr-142', and is involved in the maintenance of chromatin structures during DNA replication processes. Essential component of NoRC-5 ISWI chromatin-remodeling complex, a complex that mediates silencing of a fraction of rDNA by recruiting histone-modifying enzymes and DNA methyltransferases, leading to heterochromatin formation and transcriptional silencing. The protein is SWI/SNF-related matrix-associated actin-dependent regulator of chromatin subfamily A member 5 of Homo sapiens (Human).